The sequence spans 255 residues: Triosephosphate isomerase (255 aa).

Residue 9-11 participates in substrate binding; sequence NWK. Catalysis depends on His95, which acts as the Electrophile. The active-site Proton acceptor is the Glu167. Residues Gly173, Ser212, and 233-234 each bind substrate; that span reads GG.

It belongs to the triosephosphate isomerase family. In terms of assembly, homodimer.

The protein localises to the cytoplasm. The catalysed reaction is D-glyceraldehyde 3-phosphate = dihydroxyacetone phosphate. Its pathway is carbohydrate biosynthesis; gluconeogenesis. It participates in carbohydrate degradation; glycolysis; D-glyceraldehyde 3-phosphate from glycerone phosphate: step 1/1. Involved in the gluconeogenesis. Catalyzes stereospecifically the conversion of dihydroxyacetone phosphate (DHAP) to D-glyceraldehyde-3-phosphate (G3P). The protein is Triosephosphate isomerase of Serratia proteamaculans (strain 568).